Consider the following 1054-residue polypeptide: Translation initiation factor IF-2 (1054 aa).

Disordered regions lie at residues 57–213 (DKRK…AASC), 225–248 (DPLA…NPGD), 287–315 (SGRP…HGLQ), and 401–436 (DHAG…KQEL). Positions 92–104 (QEPSQAASDVSSP) are enriched in polar residues. The span at 111–213 (EASGAEAAAS…VTSGRRAASC (103 aa)) shows a compositional bias: low complexity. Basic and acidic residues predominate over residues 401–418 (DHAGRGRELVDVSKNKDK). Residues 552 to 721 (TRPPVVTVMG…VLQAEVLELT (170 aa)) enclose the tr-type G domain. The interval 561–568 (GHVDHGKT) is G1. 561 to 568 (GHVDHGKT) contacts GTP. Positions 586 to 590 (GITQH) are G2. The G3 stretch occupies residues 607–610 (DTPG). Residues 607–611 (DTPGH) and 661–664 (NKMD) each bind GTP. A G4 region spans residues 661–664 (NKMD). The tract at residues 697–699 (SAK) is G5.

This sequence belongs to the TRAFAC class translation factor GTPase superfamily. Classic translation factor GTPase family. IF-2 subfamily.

It is found in the cytoplasm. Functionally, one of the essential components for the initiation of protein synthesis. Protects formylmethionyl-tRNA from spontaneous hydrolysis and promotes its binding to the 30S ribosomal subunits. Also involved in the hydrolysis of GTP during the formation of the 70S ribosomal complex. The chain is Translation initiation factor IF-2 (infB) from Stigmatella aurantiaca.